A 62-amino-acid polypeptide reads, in one-letter code: Small ribosomal subunit protein uS14 (62 aa).

Zn(2+) contacts are provided by Cys25, Cys28, Cys41, and Cys44.

This sequence belongs to the universal ribosomal protein uS14 family. Zinc-binding uS14 subfamily. In terms of assembly, part of the 30S ribosomal subunit. Contacts proteins S3 and S10. Zn(2+) serves as cofactor.

Its function is as follows. Binds 16S rRNA, required for the assembly of 30S particles and may also be responsible for determining the conformation of the 16S rRNA at the A site. This Hydrogenobaculum sp. (strain Y04AAS1) protein is Small ribosomal subunit protein uS14.